A 336-amino-acid chain; its full sequence is Anthranilate phosphoribosyltransferase (336 aa).

5-phospho-alpha-D-ribose 1-diphosphate is bound by residues Gly79, 82–83 (GD), Thr87, 89–92 (NISS), 107–115 (KHGNRSVSS), and Ser119. Gly79 is an anthranilate binding site. Ser91 contributes to the Mg(2+) binding site. Asn110 is an anthranilate binding site. Residue Arg165 participates in anthranilate binding. Asp223 and Glu224 together coordinate Mg(2+).

It belongs to the anthranilate phosphoribosyltransferase family. Homodimer. Requires Mg(2+) as cofactor.

The catalysed reaction is N-(5-phospho-beta-D-ribosyl)anthranilate + diphosphate = 5-phospho-alpha-D-ribose 1-diphosphate + anthranilate. Its pathway is amino-acid biosynthesis; L-tryptophan biosynthesis; L-tryptophan from chorismate: step 2/5. Its function is as follows. Catalyzes the transfer of the phosphoribosyl group of 5-phosphorylribose-1-pyrophosphate (PRPP) to anthranilate to yield N-(5'-phosphoribosyl)-anthranilate (PRA). The protein is Anthranilate phosphoribosyltransferase of Tolumonas auensis (strain DSM 9187 / NBRC 110442 / TA 4).